A 963-amino-acid chain; its full sequence is MATQSYVTELQAAPQASQPPQAPPQALPQPPPPAAPQPPAAATPQPQYVTELQSPQPQTQPPGSQKQYVAELPAAPAPSQPATPAPSPVAQQYIVVTVSEGAMRASETVSEASPSSTASQTGVPTQVVQQVQGTQQRLLVQASVQAKPGHVSPLQLTNIQVPQQAIPTQHLVVQSPAPGTKSGQVSLTVHSAQQVHSAPERSPVQANNSTSKTAGTPAATVQQLQVHSVQQSVPVTQERSVVQATPQTKAGPVQQLTVQGLQPVHVAQEVQQLPQVPVPHVYSSQVQYVEGGDASYTASAIRSSTYQYPETPIYTQTAGTSYYEASGTAAQVSTPATSQTVASSGSVPMYVSGSPIVASSSSSEAGASNSSVGAGGNGGGGSSGGGSGGSSGSGAGTYVIQGGYMLGNASQSYSHTTRASPATVQWLLDNYETAEGVSLPRSTLYCHYLLHCQEQKLEPVNAASFGKLIRSVFMGLRTRRLGTRGNSKYHYYGLRIKASSPLLRLMEDQQHMAMRGQPFSQKQRLKPIQKMEGVANGVAVGQQSTGLSDISAQVQQYQQFLDASRSLPDFAELDLQGKVLPEGVGPGDIKAFQVLYREHCEAIVDVMVNLQFTLVETLWKTFWRYNLSQPSEAPPLAVHDEAEKRLPRASLVLLSKFQPVLQWTKHCDNVLYQGLVEILIPDVLRPIPSALTQAIRNFAKSLESWLTHAMVNIPEEMLRVKVAAAGAFAQTLRRYTSLNHLAQAARAVLQNTAQINQMLSDLNRVDFANVQEQASWVCRCEDRVVQRLEQDFKVTLQQQNSLEQWAAWLDGVVSQVLKPYQGSSGFPKAAKLFLLKWSFYSSMVIRDLTLRSAASFGSFHLIRLLYDEYMYYLIEHRVAQAKGETPIAVMGEFANLATSLNPLDPDKDEEEEEEEESEDELPQDISLAAGSESPALGPEALEPPAKLARTDTRGLFVQALPSS.

4 disordered regions span residues 1–88 (MATQ…APSP), 105–126 (ASET…VPTQ), 174–218 (QSPA…GTPA), and 361–392 (SSSE…GSSG). Positions 20–41 (PQAPPQALPQPPPPAAPQPPAA) are enriched in pro residues. A compositionally biased stretch (low complexity) spans 42 to 67 (ATPQPQYVTELQSPQPQTQPPGSQKQ). Serine 54 is subject to Phosphoserine. The span at 75 to 87 (APAPSQPATPAPS) shows a compositional bias: pro residues. Composition is skewed to polar residues over residues 107-119 (ETVS…STAS), 181-196 (KSGQ…QQVH), and 204-214 (VQANNSTSKTA). Residues 361 to 372 (SSSEAGASNSSV) are compositionally biased toward low complexity. Positions 373 to 392 (GAGGNGGGGSSGGGSGGSSG) are enriched in gly residues. A DNA-binding region (RFX-type winged-helix) is located at residues 423–498 (TVQWLLDNYE…YHYYGLRIKA (76 aa)). The segment at 899 to 948 (SLNPLDPDKDEEEEEEEESEDELPQDISLAAGSESPALGPEALEPPAKLA) is disordered. A compositionally biased stretch (acidic residues) spans 906 to 922 (DKDEEEEEEEESEDELP). Residues 932–947 (ESPALGPEALEPPAKL) are compositionally biased toward low complexity. Phosphoserine is present on residues serine 962 and serine 963.

It belongs to the RFX family. In terms of assembly, homodimer; binds DNA as a homodimer. Heterodimer; heterodimerizes with RFX2 and RFX3.

It is found in the nucleus. Its function is as follows. Regulatory factor essential for MHC class II genes expression. Binds to the X boxes of MHC class II genes. The protein is MHC class II regulatory factor RFX1 (Rfx1) of Mus musculus (Mouse).